The chain runs to 73 residues: MASNMEVFCEILIAILLPPLGVCLKRGCCTVEFLICLVLTILGYIPGIIYALYVIVFQNREGSTELGAPLNSA.

2 helical membrane-spanning segments follow: residues 4–24 (NMEVFCEILIAILLPPLGVCL) and 37–57 (LVLTILGYIPGIIYALYVIVF).

The protein belongs to the UPF0057 (PMP3) family.

The protein resides in the membrane. This Arabidopsis thaliana (Mouse-ear cress) protein is UPF0057 membrane protein At4g30650.